The sequence spans 60 residues: Transcriptional regulator Brz (60 aa).

A C4-type; atypical zinc finger spans residues 8–52 (CPRCGSDVKMGLPMGATVKSVTAASRQEPTSDTQKVRTVECRNDH).

It belongs to the Brz family.

Activates transcription of bacteriorhodopsin (bop) and phytoene synthase (crtB1). May interact with DNA or RNA via the zinc finger motif. The protein is Transcriptional regulator Brz (brz) of Halobacterium salinarum (strain ATCC 29341 / DSM 671 / R1).